The chain runs to 129 residues: Small ribosomal subunit protein uS11 (129 aa).

Belongs to the universal ribosomal protein uS11 family. As to quaternary structure, part of the 30S ribosomal subunit. Interacts with proteins S7 and S18. Binds to IF-3.

Located on the platform of the 30S subunit, it bridges several disparate RNA helices of the 16S rRNA. Forms part of the Shine-Dalgarno cleft in the 70S ribosome. The protein is Small ribosomal subunit protein uS11 of Nitrosomonas europaea (strain ATCC 19718 / CIP 103999 / KCTC 2705 / NBRC 14298).